Here is a 506-residue protein sequence, read N- to C-terminus: Cytochrome P450 6a2 (506 aa).

A heme-binding site is contributed by C451.

This sequence belongs to the cytochrome P450 family. Requires heme as cofactor.

The protein localises to the endoplasmic reticulum membrane. Its subcellular location is the microsome membrane. Its function is as follows. Is involved in the breakdown of synthetic insecticides and may be involved in the metabolism of insect hormones. The protein is Cytochrome P450 6a2 (Cyp6a2) of Drosophila melanogaster (Fruit fly).